The following is an 815-amino-acid chain: Leucine--tRNA ligase (815 aa).

The 'HIGH' region motif lies at 42-52; it reads PYPSGRLHMGH. Positions 574-578 match the 'KMSKS' region motif; it reads KMSKS. Lys-577 is an ATP binding site.

It belongs to the class-I aminoacyl-tRNA synthetase family.

The protein resides in the cytoplasm. It carries out the reaction tRNA(Leu) + L-leucine + ATP = L-leucyl-tRNA(Leu) + AMP + diphosphate. The polypeptide is Leucine--tRNA ligase (Alcanivorax borkumensis (strain ATCC 700651 / DSM 11573 / NCIMB 13689 / SK2)).